A 79-amino-acid chain; its full sequence is Sec-independent protein translocase protein TatA (79 aa).

The helical transmembrane segment at 1-21 (MGGLQPWHWVIVIAVFVLLFG) threads the bilayer. Residues 43–52 (IKEMQSEGKS) are compositionally biased toward basic and acidic residues. A disordered region spans residues 43–79 (IKEMQSEGKSDNPPATPITSERVDTNPTAEQPDKRSA).

This sequence belongs to the TatA/E family. As to quaternary structure, the Tat system comprises two distinct complexes: a TatABC complex, containing multiple copies of TatA, TatB and TatC subunits, and a separate TatA complex, containing only TatA subunits. Substrates initially bind to the TatABC complex, which probably triggers association of the separate TatA complex to form the active translocon.

Its subcellular location is the cell membrane. In terms of biological role, part of the twin-arginine translocation (Tat) system that transports large folded proteins containing a characteristic twin-arginine motif in their signal peptide across membranes. TatA could form the protein-conducting channel of the Tat system. This is Sec-independent protein translocase protein TatA from Mycobacterium sp. (strain JLS).